A 201-amino-acid polypeptide reads, in one-letter code: Urease accessory protein UreG (201 aa).

A GTP-binding site is contributed by 11-18; sequence GPVGSGKT.

The protein belongs to the SIMIBI class G3E GTPase family. UreG subfamily. In terms of assembly, homodimer. UreD, UreF and UreG form a complex that acts as a GTP-hydrolysis-dependent molecular chaperone, activating the urease apoprotein by helping to assemble the nickel containing metallocenter of UreC. The UreE protein probably delivers the nickel.

It is found in the cytoplasm. In terms of biological role, facilitates the functional incorporation of the urease nickel metallocenter. This process requires GTP hydrolysis, probably effectuated by UreG. The polypeptide is Urease accessory protein UreG (Prochlorococcus marinus subsp. pastoris (strain CCMP1986 / NIES-2087 / MED4)).